A 382-amino-acid chain; its full sequence is Mannitol-1-phosphate 5-dehydrogenase (382 aa).

NAD(+) is bound at residue 3-14; sequence ALHFGAGNIGRG.

It belongs to the mannitol dehydrogenase family.

It carries out the reaction D-mannitol 1-phosphate + NAD(+) = beta-D-fructose 6-phosphate + NADH + H(+). This is Mannitol-1-phosphate 5-dehydrogenase from Salmonella dublin (strain CT_02021853).